We begin with the raw amino-acid sequence, 765 residues long: Protein transport protein sec23-2 (765 aa).

Zn(2+)-binding residues include cysteine 56, cysteine 60, cysteine 79, and cysteine 82. Residues serine 565 and serine 566 each carry the phosphoserine modification.

It belongs to the SEC23/SEC24 family. SEC23 subfamily. The COPII coat is composed of at least 5 proteins: the sec23/24 complex, the sec13/31 complex, and the protein sar1.

Its subcellular location is the cytoplasm. The protein resides in the cytoplasmic vesicle. The protein localises to the COPII-coated vesicle membrane. It localises to the endoplasmic reticulum membrane. It is found in the golgi apparatus membrane. Its function is as follows. Component of the coat protein complex II (COPII) which promotes the formation of transport vesicles from the endoplasmic reticulum (ER). The coat has two main functions, the physical deformation of the endoplasmic reticulum membrane into vesicles and the selection of cargo molecules. In Schizosaccharomyces pombe (strain 972 / ATCC 24843) (Fission yeast), this protein is Protein transport protein sec23-2 (sec232).